Consider the following 259-residue polypeptide: Carbonic anhydrase 1 (259 aa).

Alanine 1 carries the post-translational modification N-acetylalanine. The 257-residue stretch at 2-258 folds into the Alpha-carbonic anhydrase domain; that stretch reads HAWGYGPTDG…LKGRHVRASF (257 aa). Histidine 63 acts as the Proton donor/acceptor in catalysis. Positions 93, 95, and 118 each coordinate Zn(2+). Substrate-binding positions include threonine 197 and 197–198; that span reads TT.

The protein belongs to the alpha-carbonic anhydrase family. The cofactor is Zn(2+).

The protein localises to the cytoplasm. It catalyses the reaction hydrogencarbonate + H(+) = CO2 + H2O. Its function is as follows. Catalyzes the reversible hydration of carbon dioxide. This is Carbonic anhydrase 1 (ca1) from Chionodraco hamatus (Antarctic teleost icefish).